We begin with the raw amino-acid sequence, 467 residues long: UDP-N-acetylmuramate--L-alanine ligase (467 aa).

114–120 (GTHGKTT) contacts ATP.

It belongs to the MurCDEF family.

The protein resides in the cytoplasm. It catalyses the reaction UDP-N-acetyl-alpha-D-muramate + L-alanine + ATP = UDP-N-acetyl-alpha-D-muramoyl-L-alanine + ADP + phosphate + H(+). The protein operates within cell wall biogenesis; peptidoglycan biosynthesis. Cell wall formation. The protein is UDP-N-acetylmuramate--L-alanine ligase of Bradyrhizobium sp. (strain BTAi1 / ATCC BAA-1182).